The sequence spans 308 residues: Ribosomal RNA large subunit methyltransferase F (308 aa).

The protein belongs to the methyltransferase superfamily. METTL16/RlmF family.

The protein localises to the cytoplasm. The catalysed reaction is adenosine(1618) in 23S rRNA + S-adenosyl-L-methionine = N(6)-methyladenosine(1618) in 23S rRNA + S-adenosyl-L-homocysteine + H(+). In terms of biological role, specifically methylates the adenine in position 1618 of 23S rRNA. This is Ribosomal RNA large subunit methyltransferase F from Escherichia coli O127:H6 (strain E2348/69 / EPEC).